Reading from the N-terminus, the 177-residue chain is Protein GrpE (177 aa).

The tract at residues 1–26 (MSEEIKKDDLQEEVEATETEETVEEV) is disordered. A compositionally biased stretch (acidic residues) spans 10–26 (LQEEVEATETEETVEEV).

Belongs to the GrpE family. Homodimer.

The protein resides in the cytoplasm. Functionally, participates actively in the response to hyperosmotic and heat shock by preventing the aggregation of stress-denatured proteins, in association with DnaK and GrpE. It is the nucleotide exchange factor for DnaK and may function as a thermosensor. Unfolded proteins bind initially to DnaJ; upon interaction with the DnaJ-bound protein, DnaK hydrolyzes its bound ATP, resulting in the formation of a stable complex. GrpE releases ADP from DnaK; ATP binding to DnaK triggers the release of the substrate protein, thus completing the reaction cycle. Several rounds of ATP-dependent interactions between DnaJ, DnaK and GrpE are required for fully efficient folding. The polypeptide is Protein GrpE (Streptococcus agalactiae serotype Ia (strain ATCC 27591 / A909 / CDC SS700)).